The primary structure comprises 197 residues: Large ribosomal subunit protein uL10 (197 aa).

Residues 162–197 (READGETAETPAQETASDDSKSTKAEASDASTTENK) are disordered. Basic and acidic residues predominate over residues 179 to 188 (DDSKSTKAEA).

Belongs to the universal ribosomal protein uL10 family. In terms of assembly, part of the ribosomal stalk of the 50S ribosomal subunit. The N-terminus interacts with L11 and the large rRNA to form the base of the stalk. The C-terminus forms an elongated spine to which L12 dimers bind in a sequential fashion forming a multimeric L10(L12)X complex.

In terms of biological role, forms part of the ribosomal stalk, playing a central role in the interaction of the ribosome with GTP-bound translation factors. This is Large ribosomal subunit protein uL10 from Oenococcus oeni (strain ATCC BAA-331 / PSU-1).